Here is a 260-residue protein sequence, read N- to C-terminus: Hydroxyacylglutathione hydrolase (260 aa).

Zn(2+) contacts are provided by histidine 55, histidine 57, aspartate 59, histidine 60, histidine 116, aspartate 133, and histidine 171.

Belongs to the metallo-beta-lactamase superfamily. Glyoxalase II family. Monomer. Zn(2+) serves as cofactor.

It carries out the reaction an S-(2-hydroxyacyl)glutathione + H2O = a 2-hydroxy carboxylate + glutathione + H(+). It participates in secondary metabolite metabolism; methylglyoxal degradation; (R)-lactate from methylglyoxal: step 2/2. Functionally, thiolesterase that catalyzes the hydrolysis of S-D-lactoyl-glutathione to form glutathione and D-lactic acid. The polypeptide is Hydroxyacylglutathione hydrolase (Shewanella loihica (strain ATCC BAA-1088 / PV-4)).